The sequence spans 1342 residues: DNA-directed RNA polymerase subunit beta (1342 aa).

N6-acetyllysine is present on residues Lys-1022 and Lys-1200.

It belongs to the RNA polymerase beta chain family. As to quaternary structure, the RNAP catalytic core consists of 2 alpha, 1 beta, 1 beta' and 1 omega subunit. When a sigma factor is associated with the core the holoenzyme is formed, which can initiate transcription.

It carries out the reaction RNA(n) + a ribonucleoside 5'-triphosphate = RNA(n+1) + diphosphate. DNA-dependent RNA polymerase catalyzes the transcription of DNA into RNA using the four ribonucleoside triphosphates as substrates. This chain is DNA-directed RNA polymerase subunit beta, found in Escherichia coli O81 (strain ED1a).